Here is a 490-residue protein sequence, read N- to C-terminus: One cut domain family member 3 (490 aa).

Disordered regions lie at residues 130 to 155 (GAHG…QRLA), 193 to 213 (LSPL…PPPP), and 287 to 316 (HGPH…AAAE). Residues 143–152 (ATAPPPPPPQ) are compositionally biased toward pro residues. The segment covering 290–311 (HSGGGGPGGGGGAGGGSGGPGA) has biased composition (gly residues). The segment at residues 309–395 (PGAGAAAEEI…QRMSALRLAA (87 aa)) is a DNA-binding region (CUT). The homeobox DNA-binding region spans 411–470 (PKKQRLVFTDLQRRTLIAIFKENKRPSKEMQATISQQLGLELNTVSNFFMNARRRCMNRW).

This sequence belongs to the CUT homeobox family. In terms of tissue distribution, specifically expressed in brain, stomach and gut. Within the gut, expressed only in duodenum and jejunum.

It localises to the nucleus. Its function is as follows. Transcriptional activator. Binds the consensus DNA sequence 5'-DHWATTGAYTWWD-3' on a variety of gene promoters such as those of HNF3B and TTR. The protein is One cut domain family member 3 (Onecut3) of Mus musculus (Mouse).